Here is a 161-residue protein sequence, read N- to C-terminus: DNA-binding protein inhibitor ID-4 (161 aa).

The 53-residue stretch at 52–104 (AAEAAADEPALCLQCDMNDCYSRLRRLVPTIPPNKKVSKVEILQHVIDYILDL) folds into the bHLH domain. Pro residues predominate over residues 117 to 126 (QPPPPAPPHH). A disordered region spans residues 117 to 161 (QPPPPAPPHHPAGTCPAAPPRTPLTALNTDPAGAVNKQGDSILCR).

In terms of assembly, heterodimer with other HLH proteins.

It localises to the nucleus. Transcriptional regulator (lacking a basic DNA binding domain) which negatively regulates the basic helix-loop-helix (bHLH) transcription factors by forming heterodimers and inhibiting their DNA binding and transcriptional activity. Implicated in regulating a variety of cellular processes, including cellular growth, senescence, differentiation, apoptosis, angiogenesis, and neoplastic transformation. The chain is DNA-binding protein inhibitor ID-4 (ID4) from Homo sapiens (Human).